Here is a 299-residue protein sequence, read N- to C-terminus: Virginiamycin B lyase (299 aa).

Residue His-229 coordinates substrate. Glu-269 is a binding site for Mg(2+). His-271 (proton acceptor) is an active-site residue. Glu-286 is a Mg(2+) binding site.

This sequence belongs to the Vgb family. In terms of assembly, monomer. It depends on Mg(2+) as a cofactor.

Inactivates the type B streptogramin antibiotics by linearizing the lactone ring at the ester linkage, generating a free phenylglycine carboxylate and converting the threonyl moiety into 2-amino-butenoic acid. This Bordetella bronchiseptica (strain ATCC BAA-588 / NCTC 13252 / RB50) (Alcaligenes bronchisepticus) protein is Virginiamycin B lyase.